Reading from the N-terminus, the 270-residue chain is Glutamate racemase (270 aa).

Residues 14–15 (DS) and 46–47 (YG) contribute to the substrate site. The active-site Proton donor/acceptor is the cysteine 77. 78 to 79 (NT) is a binding site for substrate. Cysteine 189 (proton donor/acceptor) is an active-site residue. 190–191 (TH) is a binding site for substrate.

Belongs to the aspartate/glutamate racemases family.

The enzyme catalyses L-glutamate = D-glutamate. It participates in cell wall biogenesis; peptidoglycan biosynthesis. In terms of biological role, provides the (R)-glutamate required for cell wall biosynthesis. The polypeptide is Glutamate racemase (Neisseria meningitidis serogroup A / serotype 4A (strain DSM 15465 / Z2491)).